Here is a 219-residue protein sequence, read N- to C-terminus: Protein-L-isoaspartate O-methyltransferase (219 aa).

Residue serine 60 is part of the active site.

This sequence belongs to the methyltransferase superfamily. L-isoaspartyl/D-aspartyl protein methyltransferase family.

It localises to the cytoplasm. The catalysed reaction is [protein]-L-isoaspartate + S-adenosyl-L-methionine = [protein]-L-isoaspartate alpha-methyl ester + S-adenosyl-L-homocysteine. Its function is as follows. Catalyzes the methyl esterification of L-isoaspartyl residues in peptides and proteins that result from spontaneous decomposition of normal L-aspartyl and L-asparaginyl residues. It plays a role in the repair and/or degradation of damaged proteins. The chain is Protein-L-isoaspartate O-methyltransferase from Rhodospirillum rubrum (strain ATCC 11170 / ATH 1.1.1 / DSM 467 / LMG 4362 / NCIMB 8255 / S1).